The sequence spans 312 residues: Olfactory receptor 10D3 (312 aa).

At 1-26 the chain is on the extracellular side; the sequence is MEVKNCCMVTEFILLGIPHTEGLEMT. The helical transmembrane segment at 27–47 threads the bilayer; it reads LFVLFLPFYACTLLGNVSILV. The Cytoplasmic portion of the chain corresponds to 48-57; it reads AVMSSARLHT. Residues 58–78 form a helical membrane-spanning segment; sequence PMYFFLGNLSVFDMGFSSVTC. The Extracellular segment spans residues 79-97; it reads PKMLLYLMGLSRLISYKDC. The cysteines at positions 97 and 179 are disulfide-linked. Residues 98–118 form a helical membrane-spanning segment; it reads VCQLFFFHFLGSIECFLFTVM. Residues 119–139 are Cytoplasmic-facing; sequence AYDRFTAICYPLRYTVIMNPR. The chain crosses the membrane as a helical span at residues 140–160; that stretch reads ICVALAVGTWLLGCIHSSILT. The Extracellular portion of the chain corresponds to 161–197; it reads SLTFTLPYCGPNEVDHFFCDIPALLPLACADTSLAQR. A helical transmembrane segment spans residues 198 to 218; sequence VSFTNVGLISLVCFLLILLSY. At 219–239 the chain is on the cytoplasmic side; it reads TRITISILSIRTTEGRRRAFS. A helical membrane pass occupies residues 240–260; sequence TCSAHLIAILCAYGPIITVYL. Over 261–266 the chain is Extracellular; sequence QPTPNP. The chain crosses the membrane as a helical span at residues 267–287; the sequence is MLGTVVQILMNLVGPMLNPLI. The Cytoplasmic portion of the chain corresponds to 288-312; sequence YTLRNKEVKTALKTILHRTGHVPES.

This sequence belongs to the G-protein coupled receptor 1 family.

Its subcellular location is the cell membrane. In terms of biological role, odorant receptor. This is Olfactory receptor 10D3 from Homo sapiens (Human).